We begin with the raw amino-acid sequence, 121 residues long: Fluoride-specific ion channel FluC 1 (121 aa).

4 consecutive transmembrane segments (helical) span residues 3 to 23 (YVYIFIGGALGALLRYLISFL), 35 to 55 (VANLTGAFIMGLLTALTIAFF), 64 to 84 (AITTGFLGALTTFSTFQLELI), and 92 to 112 (FITLLLYAITSYVFGILLCYV). The Na(+) site is built by G71 and T74.

It belongs to the fluoride channel Fluc/FEX (TC 1.A.43) family.

The protein resides in the cell membrane. It catalyses the reaction fluoride(in) = fluoride(out). Its activity is regulated as follows. Na(+) is not transported, but it plays an essential structural role and its presence is essential for fluoride channel function. Functionally, fluoride-specific ion channel. Important for reducing fluoride concentration in the cell, thus reducing its toxicity. This chain is Fluoride-specific ion channel FluC 1, found in Staphylococcus aureus (strain bovine RF122 / ET3-1).